Consider the following 314-residue polypeptide: Beta-lactamase 2 (314 aa).

The first 26 residues, 1–26, serve as a signal peptide directing secretion; the sequence is MLHTRIRRATLGAVAALSLVPVMACG. Residues 32–47 are compositionally biased toward low complexity; that stretch reads DAAEPAGSAPSSSAAA. A disordered region spans residues 32–51; the sequence is DAAEPAGSAPSSSAAAHKPG. Residue Ser96 is the Acyl-ester intermediate of the active site. Residue 258-260 coordinates substrate; it reads KTG.

It belongs to the class-A beta-lactamase family.

It catalyses the reaction a beta-lactam + H2O = a substituted beta-amino acid. The chain is Beta-lactamase 2 (blaU) from Streptomyces cacaoi.